Reading from the N-terminus, the 929-residue chain is Protocadherin gamma-B7 (929 aa).

Residues 1 to 30 (MGGSCAQRRRAGPRQVLFPLLLPLFYPTLC) form the signal peptide. Cadherin domains are found at residues 31–133 (EPIR…APQF), 134–242 (RKDE…PPVF), 243–347 (SQDV…SPEI), 348–452 (IITS…APVF), 453–562 (GQSA…APRV), and 570–675 (DGSA…LPDF). Residues 31–691 (EPIRYSIPEE…SDSQAEMQFY (661 aa)) lie on the Extracellular side of the membrane. Residues N419 and N545 are each glycosylated (N-linked (GlcNAc...) asparagine). A helical transmembrane segment spans residues 692–712 (LVVALALISVLFLLAVILAIA). Topologically, residues 713–929 (LRLRQSFSPT…KKKSGKKEKK (217 aa)) are cytoplasmic. Disordered stretches follow at residues 806–838 (QAPP…WPNN) and 899–929 (ATLT…KEKK). The segment covering 807-838 (APPNTDWRFSQAQRPGTSGSQNGDDTGTWPNN) has biased composition (polar residues). The segment covering 919-929 (NKKKSGKKEKK) has biased composition (basic residues).

The protein localises to the cell membrane. Functionally, potential calcium-dependent cell-adhesion protein. May be involved in the establishment and maintenance of specific neuronal connections in the brain. In Homo sapiens (Human), this protein is Protocadherin gamma-B7 (PCDHGB7).